Consider the following 235-residue polypeptide: Probable 2-phosphosulfolactate phosphatase (235 aa).

This sequence belongs to the ComB family. The cofactor is Mg(2+).

It carries out the reaction (2R)-O-phospho-3-sulfolactate + H2O = (2R)-3-sulfolactate + phosphate. The polypeptide is Probable 2-phosphosulfolactate phosphatase (Clostridium novyi (strain NT)).